The following is a 363-amino-acid chain: Flagellar P-ring protein (363 aa).

Positions 1 to 18 are cleaved as a signal peptide; that stretch reads MWKKVLIAIVFITSFSFA.

Belongs to the FlgI family. The basal body constitutes a major portion of the flagellar organelle and consists of four rings (L,P,S, and M) mounted on a central rod.

Its subcellular location is the periplasm. It is found in the bacterial flagellum basal body. In terms of biological role, assembles around the rod to form the L-ring and probably protects the motor/basal body from shearing forces during rotation. This chain is Flagellar P-ring protein, found in Sulfurihydrogenibium sp. (strain YO3AOP1).